A 371-amino-acid chain; its full sequence is uncharacterized protein (371 aa).

It to E.coli YcjY.

This is an uncharacterized protein from Pseudomonas aeruginosa (strain ATCC 15692 / DSM 22644 / CIP 104116 / JCM 14847 / LMG 12228 / 1C / PRS 101 / PAO1).